Consider the following 146-residue polypeptide: ATP synthase epsilon chain 2 (146 aa).

This sequence belongs to the ATPase epsilon chain family. As to quaternary structure, F-type ATPases have 2 components, CF(1) - the catalytic core - and CF(0) - the membrane proton channel. CF(1) has five subunits: alpha(3), beta(3), gamma(1), delta(1), epsilon(1). CF(0) has three main subunits: a, b and c.

The protein resides in the cell inner membrane. In terms of biological role, produces ATP from ADP in the presence of a proton gradient across the membrane. The protein is ATP synthase epsilon chain 2 of Cereibacter sphaeroides (strain ATCC 17023 / DSM 158 / JCM 6121 / CCUG 31486 / LMG 2827 / NBRC 12203 / NCIMB 8253 / ATH 2.4.1.) (Rhodobacter sphaeroides).